The following is a 265-amino-acid chain: Putative hydro-lyase PA14_37210 (265 aa).

This sequence belongs to the D-glutamate cyclase family.

This chain is Putative hydro-lyase PA14_37210, found in Pseudomonas aeruginosa (strain UCBPP-PA14).